We begin with the raw amino-acid sequence, 171 residues long: 3-hydroxydecanoyl-[acyl-carrier-protein] dehydratase (171 aa).

The active site involves His-70.

This sequence belongs to the thioester dehydratase family. FabA subfamily. Homodimer.

Its subcellular location is the cytoplasm. It catalyses the reaction a (3R)-hydroxyacyl-[ACP] = a (2E)-enoyl-[ACP] + H2O. It carries out the reaction (3R)-hydroxydecanoyl-[ACP] = (2E)-decenoyl-[ACP] + H2O. The enzyme catalyses (2E)-decenoyl-[ACP] = (3Z)-decenoyl-[ACP]. Its pathway is lipid metabolism; fatty acid biosynthesis. In terms of biological role, necessary for the introduction of cis unsaturation into fatty acids. Catalyzes the dehydration of (3R)-3-hydroxydecanoyl-ACP to E-(2)-decenoyl-ACP and then its isomerization to Z-(3)-decenoyl-ACP. Can catalyze the dehydratase reaction for beta-hydroxyacyl-ACPs with saturated chain lengths up to 16:0, being most active on intermediate chain length. The polypeptide is 3-hydroxydecanoyl-[acyl-carrier-protein] dehydratase (Shewanella denitrificans (strain OS217 / ATCC BAA-1090 / DSM 15013)).